We begin with the raw amino-acid sequence, 334 residues long: Protein-methionine-sulfoxide reductase catalytic subunit MsrP (334 aa).

The segment at residues 1 to 44 (MKKNQFLKESDVTAESVFFMKRRQVLKALGISAAALSLPHAAHA) is a signal peptide (tat-type signal). Mo-molybdopterin is bound by residues N88, 91-92 (YE), C146, T181, N233, R238, and 249-251 (GIK).

Belongs to the MsrP family. Heterodimer of a catalytic subunit (MsrP) and a heme-binding subunit (MsrQ). Mo-molybdopterin is required as a cofactor. In terms of processing, predicted to be exported by the Tat system. The position of the signal peptide cleavage has not been experimentally proven.

It is found in the periplasm. It carries out the reaction L-methionyl-[protein] + a quinone + H2O = L-methionyl-(S)-S-oxide-[protein] + a quinol. It catalyses the reaction L-methionyl-[protein] + a quinone + H2O = L-methionyl-(R)-S-oxide-[protein] + a quinol. Its function is as follows. Part of the MsrPQ system that repairs oxidized periplasmic proteins containing methionine sulfoxide residues (Met-O), using respiratory chain electrons. Thus protects these proteins from oxidative-stress damage caused by reactive species of oxygen and chlorine generated by the host defense mechanisms. MsrPQ is essential for the maintenance of envelope integrity under bleach stress, rescuing a wide series of structurally unrelated periplasmic proteins from methionine oxidation, including the primary periplasmic chaperone SurA and the lipoprotein Pal. The catalytic subunit MsrP is non-stereospecific, being able to reduce both (R-) and (S-) diastereoisomers of methionine sulfoxide. The sequence is that of Protein-methionine-sulfoxide reductase catalytic subunit MsrP from Shigella sonnei (strain Ss046).